The chain runs to 491 residues: Protein nucleotidyltransferase YdiU (491 aa).

8 residues coordinate ATP: G88, G90, R91, K111, D123, G124, R174, and R181. The Proton acceptor role is filled by D250. 2 residues coordinate Mg(2+): N251 and D260. D260 is a binding site for ATP.

The protein belongs to the SELO family. The cofactor is Mg(2+). Mn(2+) serves as cofactor.

It catalyses the reaction L-seryl-[protein] + ATP = 3-O-(5'-adenylyl)-L-seryl-[protein] + diphosphate. The catalysed reaction is L-threonyl-[protein] + ATP = 3-O-(5'-adenylyl)-L-threonyl-[protein] + diphosphate. It carries out the reaction L-tyrosyl-[protein] + ATP = O-(5'-adenylyl)-L-tyrosyl-[protein] + diphosphate. The enzyme catalyses L-histidyl-[protein] + UTP = N(tele)-(5'-uridylyl)-L-histidyl-[protein] + diphosphate. It catalyses the reaction L-seryl-[protein] + UTP = O-(5'-uridylyl)-L-seryl-[protein] + diphosphate. The catalysed reaction is L-tyrosyl-[protein] + UTP = O-(5'-uridylyl)-L-tyrosyl-[protein] + diphosphate. Nucleotidyltransferase involved in the post-translational modification of proteins. It can catalyze the addition of adenosine monophosphate (AMP) or uridine monophosphate (UMP) to a protein, resulting in modifications known as AMPylation and UMPylation. The protein is Protein nucleotidyltransferase YdiU of Bradyrhizobium diazoefficiens (strain JCM 10833 / BCRC 13528 / IAM 13628 / NBRC 14792 / USDA 110).